Here is a 404-residue protein sequence, read N- to C-terminus: uncharacterized protein (404 aa).

[4Fe-4S] cluster contacts are provided by cysteine 69, cysteine 75, cysteine 78, and cysteine 166. Residues glutamine 226, tyrosine 253, glutamate 274, and aspartate 334 each contribute to the S-adenosyl-L-methionine site. Cysteine 361 serves as the catalytic Nucleophile.

The protein belongs to the class I-like SAM-binding methyltransferase superfamily. RNA M5U methyltransferase family.

This is an uncharacterized protein from Treponema denticola (strain ATCC 35405 / DSM 14222 / CIP 103919 / JCM 8153 / KCTC 15104).